The primary structure comprises 601 residues: Terpinolene synthase, chloroplastic (601 aa).

The transit peptide at 1 to 32 (MSTFVISNSMHVGISFSFLHKLPQTPPPQVVC) directs the protein to the chloroplast. Positions 354, 358, 498, 502, and 506 each coordinate Mg(2+). The short motif at 354–358 (DDVYD) is the DDXXD motif element.

This sequence belongs to the terpene synthase family. Tpsd subfamily. Mg(2+) serves as cofactor. It depends on Mn(2+) as a cofactor.

It is found in the plastid. Its subcellular location is the chloroplast. The enzyme catalyses (2E)-geranyl diphosphate = terpinolene + diphosphate. Its pathway is secondary metabolite biosynthesis; terpenoid biosynthesis. In terms of biological role, monoterpene synthase that catalyzes the formation of terpinolene and other monoterpenes from geranyl diphosphate. The polypeptide is Terpinolene synthase, chloroplastic (TES) (Ocimum basilicum (Sweet basil)).